The sequence spans 488 residues: Palmitoleoyl-protein carboxylesterase notum1' (488 aa).

The N-terminal stretch at 1–19 (MAGTLCVTLLLLLSTIAVG) is a signal peptide. Asn-90 is a glycosylation site (N-linked (GlcNAc...) asparagine). Active-site charge relay system residues include Ser-226, Asp-334, and His-383.

It belongs to the pectinacetylesterase family. Notum subfamily. In terms of tissue distribution, expressed in the egg and through cleavage to gastrulation stages. Enriched in the animal (prospective ectoderm) and dorsal regions in early gastrula. Shows a dynamic expression during embryogenesis, in particular during neural induction and antero-posterior (AP) patterning.

It localises to the secreted. The enzyme catalyses [Wnt protein]-O-(9Z)-hexadecenoyl-L-serine + H2O = [Wnt protein]-L-serine + (9Z)-hexadecenoate + H(+). Carboxylesterase that acts as a key negative regulator of the Wnt signaling pathway by specifically mediating depalmitoleoylation of WNT proteins. Serine palmitoleoylation of WNT proteins is required for efficient binding to frizzled receptors. Functions in the prospective ectoderm and is required for neural induction. In Xenopus laevis (African clawed frog), this protein is Palmitoleoyl-protein carboxylesterase notum1'.